The following is a 745-amino-acid chain: Myeloperoxidase (745 aa).

A signal peptide spans 1-48 (MGVPFFSSLRCMVDLGPCWAGGLTAEMKLLLALAGLLAILATPQPSEG). A glycan (N-linked (GlcNAc...) asparagine) is linked at Asn-139. A disulfide bridge connects residues Cys-167 and Cys-180. Asp-260 contributes to the heme b binding site. The active-site Proton acceptor is the His-261. Ca(2+) is bound at residue Asp-262. 2 disulfides stabilise this stretch: Cys-281-Cys-291 and Cys-285-Cys-309. At Cys-316 the chain carries Cysteine sulfenic acid (-SOH). Asn-323 carries N-linked (GlcNAc...) asparagine glycosylation. Residues Thr-334, Phe-336, Asp-338, and Ser-340 each contribute to the Ca(2+) site. Residues Asn-355 and Asn-391 are each glycosylated (N-linked (GlcNAc...) asparagine). Cys-387 and Cys-398 are oxidised to a cystine. Heme b contacts are provided by Glu-408 and Met-409. Asn-483 is a glycosylation site (N-linked (GlcNAc...) asparagine). His-502 provides a ligand contact to heme b. Intrachain disulfides connect Cys-606–Cys-663 and Cys-704–Cys-730. Asn-729 is a glycosylation site (N-linked (GlcNAc...) asparagine).

This sequence belongs to the peroxidase family. XPO subfamily. As to quaternary structure, homodimer; disulfide-linked. Each monomer consists of a light and a heavy chain. Found in a complex with CP and LTF; interacts directly with CP, which protects CP antioxidant properties by MPO. Ca(2+) is required as a cofactor. It depends on heme b as a cofactor.

The protein localises to the lysosome. It catalyses the reaction chloride + H2O2 + H(+) = hypochlorous acid + H2O. Its function is as follows. Part of the host defense system of polymorphonuclear leukocytes. It is responsible for microbicidal activity against a wide range of organisms. In the stimulated PMN, MPO catalyzes the production of hypohalous acids, primarily hypochlorous acid in physiologic situations, and other toxic intermediates that greatly enhance PMN microbicidal activity. Mediates the proteolytic cleavage of alpha-1-microglobulin to form t-alpha-1-microglobulin, which potently inhibits oxidation of low-density lipoprotein particles and limits vascular damage. In Homo sapiens (Human), this protein is Myeloperoxidase.